A 70-amino-acid chain; its full sequence is Large ribosomal subunit protein bL28 (70 aa).

This sequence belongs to the bacterial ribosomal protein bL28 family.

The chain is Large ribosomal subunit protein bL28 from Thermosipho melanesiensis (strain DSM 12029 / CIP 104789 / BI429).